Consider the following 397-residue polypeptide: CCA-adding enzyme (397 aa).

Residues G8 and R11 each coordinate ATP. Positions 8 and 11 each coordinate CTP. Mg(2+) is bound by residues E21 and D23. ATP-binding residues include R91, R137, and R140. Positions 91, 137, and 140 each coordinate CTP. Residues 213-324 (NLDAAIATLK…LALFNGCDAW (112 aa)) form the HD domain.

This sequence belongs to the tRNA nucleotidyltransferase/poly(A) polymerase family. Bacterial CCA-adding enzyme type 2 subfamily. Requires Mg(2+) as cofactor.

The catalysed reaction is a tRNA precursor + 2 CTP + ATP = a tRNA with a 3' CCA end + 3 diphosphate. The enzyme catalyses a tRNA with a 3' CCA end + 2 CTP + ATP = a tRNA with a 3' CCACCA end + 3 diphosphate. Its function is as follows. Catalyzes the addition and repair of the essential 3'-terminal CCA sequence in tRNAs without using a nucleic acid template. Adds these three nucleotides in the order of C, C, and A to the tRNA nucleotide-73, using CTP and ATP as substrates and producing inorganic pyrophosphate. tRNA 3'-terminal CCA addition is required both for tRNA processing and repair. Also involved in tRNA surveillance by mediating tandem CCA addition to generate a CCACCA at the 3' terminus of unstable tRNAs. While stable tRNAs receive only 3'-terminal CCA, unstable tRNAs are marked with CCACCA and rapidly degraded. In Alteromonas mediterranea (strain DSM 17117 / CIP 110805 / LMG 28347 / Deep ecotype), this protein is CCA-adding enzyme.